Consider the following 331-residue polypeptide: Biotin synthase (331 aa).

In terms of domain architecture, Radical SAM core spans 52-277 (PDVEVEGIIS…RTMLRFAGGR (226 aa)). Positions 67, 71, and 74 each coordinate [4Fe-4S] cluster. Residues C110, C143, C202, and R272 each coordinate [2Fe-2S] cluster.

The protein belongs to the radical SAM superfamily. Biotin synthase family. As to quaternary structure, homodimer. Requires [4Fe-4S] cluster as cofactor. It depends on [2Fe-2S] cluster as a cofactor.

It carries out the reaction (4R,5S)-dethiobiotin + (sulfur carrier)-SH + 2 reduced [2Fe-2S]-[ferredoxin] + 2 S-adenosyl-L-methionine = (sulfur carrier)-H + biotin + 2 5'-deoxyadenosine + 2 L-methionine + 2 oxidized [2Fe-2S]-[ferredoxin]. It functions in the pathway cofactor biosynthesis; biotin biosynthesis; biotin from 7,8-diaminononanoate: step 2/2. Its function is as follows. Catalyzes the conversion of dethiobiotin (DTB) to biotin by the insertion of a sulfur atom into dethiobiotin via a radical-based mechanism. This is Biotin synthase from Mycobacterium sp. (strain JLS).